The following is a 54-amino-acid chain: UPF0391 membrane protein BAB1_1670 (54 aa).

The next 2 membrane-spanning stretches (helical) occupy residues 5-25 and 29-48; these read VLVFLVVALVAGALGFGGIAG and GIAQILFFVFLALLVISLIA.

The protein belongs to the UPF0391 family.

It is found in the cell membrane. This Brucella abortus (strain 2308) protein is UPF0391 membrane protein BAB1_1670.